The chain runs to 472 residues: UDP-N-acetylmuramate--L-alanine ligase (472 aa).

122 to 128 (GSHGKTT) contacts ATP.

This sequence belongs to the MurCDEF family.

Its subcellular location is the cytoplasm. The catalysed reaction is UDP-N-acetyl-alpha-D-muramate + L-alanine + ATP = UDP-N-acetyl-alpha-D-muramoyl-L-alanine + ADP + phosphate + H(+). It participates in cell wall biogenesis; peptidoglycan biosynthesis. Its function is as follows. Cell wall formation. The protein is UDP-N-acetylmuramate--L-alanine ligase of Myxococcus xanthus (strain DK1622).